Reading from the N-terminus, the 605-residue chain is Copper resistance protein A (605 aa).

The segment at residues 1-41 (MLLKTSRRTFLKGLTLSGVAGSLGVWSFNARSSLSLPVAAS) is a signal peptide (tat-type signal). His100, His102, His142, and His144 together coordinate Cu cation. Repeat copies occupy residues 382 to 389 (DHSQMGGM), 414 to 421 (DHSSMAGM), and 422 to 429 (DHSRMAGM). Residues 382 to 429 (DHSQMGGMDNSGEMMSMDGADLPDSGTSSAPMDHSSMAGMDHSRMAGM) are 3 X 8 AA tandem repeats of D-H-X-X-M-X-G-M. His538, His541, His543, His586, Cys587, His588, His592, and Met597 together coordinate Cu cation.

This sequence belongs to the multicopper oxidase family. CopA subfamily. In terms of processing, predicted to be exported by the Tat system. The position of the signal peptide cleavage has not been experimentally proven.

The protein resides in the periplasm. Functionally, required for the copper-inducible expression of copper resistance. May have oxidase activity. In Escherichia coli, this protein is Copper resistance protein A (pcoA).